The primary structure comprises 164 residues: 2-C-methyl-D-erythritol 2,4-cyclodiphosphate synthase (164 aa).

Positions 9 and 11 each coordinate a divalent metal cation. 4-CDP-2-C-methyl-D-erythritol 2-phosphate is bound by residues 9 to 11 (DAH) and 36 to 37 (HS). H44 contributes to the a divalent metal cation binding site. Residues 58–60 (DLG), 63–67 (FPDSD), 134–137 (TTTE), F141, and R144 contribute to the 4-CDP-2-C-methyl-D-erythritol 2-phosphate site.

Belongs to the IspF family. As to quaternary structure, homotrimer. It depends on a divalent metal cation as a cofactor.

The catalysed reaction is 4-CDP-2-C-methyl-D-erythritol 2-phosphate = 2-C-methyl-D-erythritol 2,4-cyclic diphosphate + CMP. It functions in the pathway isoprenoid biosynthesis; isopentenyl diphosphate biosynthesis via DXP pathway; isopentenyl diphosphate from 1-deoxy-D-xylulose 5-phosphate: step 4/6. Functionally, involved in the biosynthesis of isopentenyl diphosphate (IPP) and dimethylallyl diphosphate (DMAPP), two major building blocks of isoprenoid compounds. Catalyzes the conversion of 4-diphosphocytidyl-2-C-methyl-D-erythritol 2-phosphate (CDP-ME2P) to 2-C-methyl-D-erythritol 2,4-cyclodiphosphate (ME-CPP) with a corresponding release of cytidine 5-monophosphate (CMP). This Alkalilimnicola ehrlichii (strain ATCC BAA-1101 / DSM 17681 / MLHE-1) protein is 2-C-methyl-D-erythritol 2,4-cyclodiphosphate synthase.